The primary structure comprises 456 residues: Histidinol dehydrogenase homolog (456 aa).

His-279 serves as a coordination point for Zn(2+). Active-site proton acceptor residues include Glu-347 and His-348. His-440 contacts Zn(2+).

It belongs to the histidinol dehydrogenase family. Requires Zn(2+) as cofactor.

The sequence is that of Histidinol dehydrogenase homolog from Rhizobium meliloti (strain 1021) (Ensifer meliloti).